Consider the following 312-residue polypeptide: Heme oxygenase 2 (312 aa).

An N-acetylserine modification is found at Ser2. Ser2 carries the post-translational modification Phosphoserine. His41 is a heme b binding site. 2 HRM repeats span residues 260 to 265 and 277 to 282; these read KCPYYA and SCPFRA. S-nitrosocysteine occurs at positions 261 and 278.

It belongs to the heme oxygenase family. In terms of processing, S-nitrosylated by BLVRB.

It localises to the microsome. The protein resides in the endoplasmic reticulum. The enzyme catalyses heme b + 3 reduced [NADPH--hemoprotein reductase] + 3 O2 = biliverdin IXalpha + CO + Fe(2+) + 3 oxidized [NADPH--hemoprotein reductase] + 3 H2O + H(+). In terms of biological role, heme oxygenase cleaves the heme ring at the alpha methene bridge to form biliverdin. Biliverdin is subsequently converted to bilirubin by biliverdin reductase. Under physiological conditions, the activity of heme oxygenase is highest in the spleen, where senescent erythrocytes are sequestrated and destroyed. Heme oxygenase 2 could be implicated in the production of carbon monoxide in brain where it could act as a neurotransmitter. This is Heme oxygenase 2 (HMOX2) from Oryctolagus cuniculus (Rabbit).